Here is a 148-residue protein sequence, read N- to C-terminus: Putative fusion protein (148 aa).

Positions 1 to 34 (MDRALSTFPGDDDETNERNINHREKTSGEHGHYE) are disordered. Basic and acidic residues predominate over residues 16–34 (NERNINHREKTSGEHGHYE).

It belongs to the poxviruses fusion protein family. As to quaternary structure, homotrimer, covalently linked.

The protein resides in the virion membrane. This Sheeppox virus (strain KS-1) (SPPV) protein is Putative fusion protein.